A 709-amino-acid polypeptide reads, in one-letter code: Tyrosine-protein phosphatase cdc-14 (709 aa).

In terms of domain architecture, Tyrosine-protein phosphatase spans 196–354 (DFNWIIPGKI…QKFCWSLSQS (159 aa)). Cys295 acts as the Phosphocysteine intermediate in catalysis. Residues 366-371 (KRNVRR) carry the Nuclear localization signal motif. Positions 372-381 (LVNQVDDINL) match the Nuclear export signal motif. Disordered regions lie at residues 403-541 (VQVQ…LTRT), 573-594 (RYLS…GTSP), and 628-661 (ESKP…PYPS). Residues 404 to 413 (QVQNGRSTAP) are compositionally biased toward polar residues. Residues 463–479 (TTSPNSSSSRRFVKSST) show a composition bias toward low complexity. Composition is skewed to polar residues over residues 480–490 (PQMTVPSQAYL) and 501–521 (PSKN…TPNG). Low complexity predominate over residues 526–541 (RTRNSSGNTTSTLTRT). Residues 639–649 (PGTSKSTSSLK) show a composition bias toward polar residues.

This sequence belongs to the protein-tyrosine phosphatase family. Non-receptor class CDC14 subfamily.

The protein localises to the cytoplasm. It localises to the cytoskeleton. It is found in the microtubule organizing center. Its subcellular location is the centrosome. The protein resides in the spindle. The protein localises to the midbody. It localises to the nucleus. It carries out the reaction O-phospho-L-tyrosyl-[protein] + H2O = L-tyrosyl-[protein] + phosphate. Inhibited by sodium orthovanadate. Weakly inhibited by sodium fluoride and okadaic acid. In terms of biological role, protein phosphatase that negatively regulates the G1-to-S phase transition to inhibit the cell cycle and establish quiescence in cells of multiple lineages including vulval, hypodermal and intestinal. Promotes nuclear accumulation and activity of the cyclin-dependent kinase inhibitor cki-1 which leads to inhibition of G1 progression during vulval tissue development. Has been shown to not be required for cytokinesis. However, in the embryo, in a contrasting study, has been shown to act as a regulator of central spindle formation and cytokinesis, and may be required for localization of the spindle component zen-4, and its interacting partner air-2 at the spindle during late cell divisions. Its function is as follows. Main regulator of cell cycle arrest in vulval precursor cells. The polypeptide is Tyrosine-protein phosphatase cdc-14 (Caenorhabditis elegans).